The following is a 423-amino-acid chain: Glutamyl-tRNA reductase 2 (423 aa).

Residues 48–51 (TCYR), serine 103, 108–110 (EPQ), and glutamine 114 contribute to the substrate site. Cysteine 49 functions as the Nucleophile in the catalytic mechanism. Position 183 to 188 (183 to 188 (GAGEMA)) interacts with NADP(+).

The protein belongs to the glutamyl-tRNA reductase family. In terms of assembly, homodimer.

The catalysed reaction is (S)-4-amino-5-oxopentanoate + tRNA(Glu) + NADP(+) = L-glutamyl-tRNA(Glu) + NADPH + H(+). It participates in porphyrin-containing compound metabolism; protoporphyrin-IX biosynthesis; 5-aminolevulinate from L-glutamyl-tRNA(Glu): step 1/2. Functionally, catalyzes the NADPH-dependent reduction of glutamyl-tRNA(Glu) to glutamate 1-semialdehyde (GSA). The protein is Glutamyl-tRNA reductase 2 of Anaeromyxobacter sp. (strain Fw109-5).